The primary structure comprises 94 residues: Phosphoribosyl-ATP pyrophosphatase (94 aa).

Belongs to the PRA-PH family.

The protein localises to the cytoplasm. The catalysed reaction is 1-(5-phospho-beta-D-ribosyl)-ATP + H2O = 1-(5-phospho-beta-D-ribosyl)-5'-AMP + diphosphate + H(+). The protein operates within amino-acid biosynthesis; L-histidine biosynthesis; L-histidine from 5-phospho-alpha-D-ribose 1-diphosphate: step 2/9. The chain is Phosphoribosyl-ATP pyrophosphatase from Saccharolobus islandicus (strain Y.N.15.51 / Yellowstone #2) (Sulfolobus islandicus).